The chain runs to 118 residues: MASGRSLLTGLFVGGIIGGAAVLLTAPSSGKQLREKMKTNYDSFEETIKRLKSDGLALKDQLIKAAKESTDVIKDVGGELQTSIKKWQEEIKPHQQDLQKEIADIEEKIRQLEKTLQN.

Residues 7–27 (LLTGLFVGGIIGGAAVLLTAP) form a helical membrane-spanning segment. Positions 31 to 118 (KQLREKMKTN…IRQLEKTLQN (88 aa)) form a coiled coil.

The protein resides in the cell membrane. This is an uncharacterized protein from Bacillus subtilis (strain 168).